Reading from the N-terminus, the 432-residue chain is Adenylosuccinate synthetase (432 aa).

GTP-binding positions include 13–19 (GDEGKGK) and 41–43 (GHT). Aspartate 14 functions as the Proton acceptor in the catalytic mechanism. Aspartate 14 and glycine 41 together coordinate Mg(2+). Residues 14-17 (DEGK), 39-42 (NAGH), threonine 130, arginine 144, glutamine 225, threonine 240, and arginine 304 contribute to the IMP site. The active-site Proton donor is histidine 42. Residue 300-306 (STTGRPR) participates in substrate binding. GTP is bound by residues arginine 306, 332-334 (KLD), and 416-418 (STG).

The protein belongs to the adenylosuccinate synthetase family. As to quaternary structure, homodimer. Mg(2+) is required as a cofactor.

It localises to the cytoplasm. It carries out the reaction IMP + L-aspartate + GTP = N(6)-(1,2-dicarboxyethyl)-AMP + GDP + phosphate + 2 H(+). It functions in the pathway purine metabolism; AMP biosynthesis via de novo pathway; AMP from IMP: step 1/2. Plays an important role in the de novo pathway of purine nucleotide biosynthesis. Catalyzes the first committed step in the biosynthesis of AMP from IMP. The chain is Adenylosuccinate synthetase from Nitrosomonas europaea (strain ATCC 19718 / CIP 103999 / KCTC 2705 / NBRC 14298).